The following is a 187-amino-acid chain: Ribosome-recycling factor (187 aa).

The protein belongs to the RRF family.

Its subcellular location is the cytoplasm. Responsible for the release of ribosomes from messenger RNA at the termination of protein biosynthesis. May increase the efficiency of translation by recycling ribosomes from one round of translation to another. This is Ribosome-recycling factor from Rhodopseudomonas palustris (strain BisA53).